Here is a 102-residue protein sequence, read N- to C-terminus: ATP-dependent Clp protease adapter protein ClpS (102 aa).

It belongs to the ClpS family. In terms of assembly, binds to the N-terminal domain of the chaperone ClpA.

Its function is as follows. Involved in the modulation of the specificity of the ClpAP-mediated ATP-dependent protein degradation. The sequence is that of ATP-dependent Clp protease adapter protein ClpS from Shewanella amazonensis (strain ATCC BAA-1098 / SB2B).